The primary structure comprises 96 residues: Probable quinol oxidase subunit 4 (96 aa).

The next 3 helical transmembrane spans lie at 8-28 (TVGF…TLYT), 36-56 (VTII…MFMH), and 68-88 (FKVI…YWVM).

Belongs to the cytochrome c oxidase bacterial subunit 4 family.

The protein localises to the cell membrane. The catalysed reaction is 2 a quinol + O2 = 2 a quinone + 2 H2O. Catalyzes quinol oxidation with the concomitant reduction of oxygen to water. The polypeptide is Probable quinol oxidase subunit 4 (qoxD) (Staphylococcus epidermidis (strain ATCC 35984 / DSM 28319 / BCRC 17069 / CCUG 31568 / BM 3577 / RP62A)).